A 288-amino-acid polypeptide reads, in one-letter code: Protoheme IX farnesyltransferase (288 aa).

Helical transmembrane passes span 16–36 (VWSL…NRFT), 37–57 (LTNI…SMGA), 88–108 (VKGL…LLFF), 111–131 (YLAA…YSYL), 138–158 (WNII…WYTV), 162–182 (FSVL…IHVW), 210–230 (AICI…PVFF), 236–256 (TYMI…VLFV), and 265–285 (LKLF…VLIF).

Belongs to the UbiA prenyltransferase family. Protoheme IX farnesyltransferase subfamily.

Its subcellular location is the cell membrane. The catalysed reaction is heme b + (2E,6E)-farnesyl diphosphate + H2O = Fe(II)-heme o + diphosphate. Its pathway is porphyrin-containing compound metabolism; heme O biosynthesis; heme O from protoheme: step 1/1. Its function is as follows. Converts heme B (protoheme IX) to heme O by substitution of the vinyl group on carbon 2 of heme B porphyrin ring with a hydroxyethyl farnesyl side group. This chain is Protoheme IX farnesyltransferase, found in Thermoplasma volcanium (strain ATCC 51530 / DSM 4299 / JCM 9571 / NBRC 15438 / GSS1).